Here is a 316-residue protein sequence, read N- to C-terminus: L-lactate dehydrogenase (316 aa).

NAD(+)-binding positions include V16, D37, K42, Y68, and 82-83 (GA). Residues Q85 and R91 each contribute to the substrate site. NAD(+) contacts are provided by residues S104, 121-123 (AAN), and S146. 123–126 (NPVD) lines the substrate pocket. 151-154 (DSAR) serves as a coordination point for substrate. Beta-D-fructose 1,6-bisphosphate is bound by residues R156 and H171. The Proton acceptor role is filled by H178. Y222 carries the phosphotyrosine modification. T231 serves as a coordination point for substrate.

This sequence belongs to the LDH/MDH superfamily. LDH family. As to quaternary structure, homotetramer.

It localises to the cytoplasm. It catalyses the reaction (S)-lactate + NAD(+) = pyruvate + NADH + H(+). Its pathway is fermentation; pyruvate fermentation to lactate; (S)-lactate from pyruvate: step 1/1. Allosterically activated by fructose 1,6-bisphosphate (FBP). Functionally, catalyzes the conversion of lactate to pyruvate. In Staphylococcus epidermidis (strain ATCC 12228 / FDA PCI 1200), this protein is L-lactate dehydrogenase.